Consider the following 141-residue polypeptide: Large ribosomal subunit protein uL11 (141 aa).

This sequence belongs to the universal ribosomal protein uL11 family. In terms of assembly, part of the ribosomal stalk of the 50S ribosomal subunit. Interacts with L10 and the large rRNA to form the base of the stalk. L10 forms an elongated spine to which L12 dimers bind in a sequential fashion forming a multimeric L10(L12)X complex. Post-translationally, one or more lysine residues are methylated.

Forms part of the ribosomal stalk which helps the ribosome interact with GTP-bound translation factors. This Geobacter sulfurreducens (strain ATCC 51573 / DSM 12127 / PCA) protein is Large ribosomal subunit protein uL11.